The primary structure comprises 411 residues: 2,3-bisphosphoglycerate-independent phosphoglycerate mutase (411 aa).

This sequence belongs to the BPG-independent phosphoglycerate mutase family. A-PGAM subfamily.

It carries out the reaction (2R)-2-phosphoglycerate = (2R)-3-phosphoglycerate. The protein operates within carbohydrate degradation; glycolysis; pyruvate from D-glyceraldehyde 3-phosphate: step 3/5. Functionally, catalyzes the interconversion of 2-phosphoglycerate and 3-phosphoglycerate. This is 2,3-bisphosphoglycerate-independent phosphoglycerate mutase from Pyrobaculum aerophilum (strain ATCC 51768 / DSM 7523 / JCM 9630 / CIP 104966 / NBRC 100827 / IM2).